A 142-amino-acid polypeptide reads, in one-letter code: Transcriptional regulator MraZ (142 aa).

2 SpoVT-AbrB domains span residues Ala5–Glu51 and Ala77–Thr120.

Belongs to the MraZ family. Forms oligomers.

The protein resides in the cytoplasm. It localises to the nucleoid. This Paraburkholderia phytofirmans (strain DSM 17436 / LMG 22146 / PsJN) (Burkholderia phytofirmans) protein is Transcriptional regulator MraZ.